We begin with the raw amino-acid sequence, 651 residues long: Protein numb homolog (651 aa).

The PID domain occupies 33–193 (RTGKCSFPVK…ASRTTFTREG (161 aa)). Thr-102 bears the Phosphothreonine; by AAK1 mark. Ser-194 carries the post-translational modification Phosphoserine. The disordered stretch occupies residues 228-255 (SSVAPGNTAPSPSSPTSPTSDATTSLEM). Positions 235–252 (TAPSPSSPTSPTSDATTS) are enriched in low complexity. Thr-243 is subject to Phosphothreonine. Ser-244 is subject to Phosphoserine. Ser-276 and Ser-295 each carry phosphoserine; by CaMK1. 2 disordered regions span residues 419 to 483 (QSSG…SPFQ) and 623 to 651 (LENK…EIEL). At Ser-425 the chain carries Phosphoserine. Thr-436 carries the phosphothreonine modification. Residues 436–449 (TPSEADRWLEEVSK) show a composition bias toward basic and acidic residues. Phosphoserine is present on Ser-438. A compositionally biased stretch (low complexity) spans 453–466 (AQQPQASAAPLQPV). Residues 630–644 (RTNPSPTNPFSSDLQ) show a composition bias toward polar residues. Position 634 is a phosphoserine (Ser-634).

In terms of assembly, interacts with SIAH1. Interacts with LNX. Interacts with CDH1. Interacts with TFAP2A and TFAP2B. Interacts with RALBP1 in a complex also containing EPN1 and TFAP2A during interphase and mitosis. Interacts with AAK1. May interact with DUOXA1. Phosphorylated on Ser-276 and Ser-295 by CaMK1. In terms of processing, isoform 1 and isoform 2 are ubiquitinated by LNX leading to their subsequent proteasomal degradation. Ubiquitinated; mediated by SIAH1 and leading to its subsequent proteasomal degradation.

It localises to the cell membrane. The protein localises to the endosome membrane. Regulates clathrin-mediated receptor endocytosis. Plays a role in the process of neurogenesis. Required throughout embryonic neurogenesis to maintain neural progenitor cells, also called radial glial cells (RGCs), by allowing their daughter cells to choose progenitor over neuronal cell fate. Not required for the proliferation of neural progenitor cells before the onset of neurogenesis. Also involved postnatally in the subventricular zone (SVZ) neurogenesis by regulating SVZ neuroblasts survival and ependymal wall integrity. May also mediate local repair of brain ventricular wall damage. The chain is Protein numb homolog from Homo sapiens (Human).